The following is a 410-amino-acid chain: 3-phosphoshikimate 1-carboxyvinyltransferase (410 aa).

Residues Lys-27, Ser-28, and Arg-32 each coordinate 3-phosphoshikimate. Residue Lys-27 participates in phosphoenolpyruvate binding. Gly-91 and Arg-119 together coordinate phosphoenolpyruvate. The 3-phosphoshikimate site is built by Ser-161, Ser-162, Gln-163, Asp-297, Gln-319, and Lys-323. Gln-163 contributes to the phosphoenolpyruvate binding site. Asp-297 functions as the Proton acceptor in the catalytic mechanism. Phosphoenolpyruvate-binding residues include Arg-327, Arg-368, and Lys-394.

This sequence belongs to the EPSP synthase family. As to quaternary structure, monomer.

The protein resides in the cytoplasm. It catalyses the reaction 3-phosphoshikimate + phosphoenolpyruvate = 5-O-(1-carboxyvinyl)-3-phosphoshikimate + phosphate. It participates in metabolic intermediate biosynthesis; chorismate biosynthesis. Catalyzes the transfer of the enolpyruvyl moiety of phosphoenolpyruvate (PEP) to the 5-hydroxyl of shikimate-3-phosphate (S3P) to produce enolpyruvyl shikimate-3-phosphate and inorganic phosphate. This Pyrococcus abyssi (strain GE5 / Orsay) protein is 3-phosphoshikimate 1-carboxyvinyltransferase.